The sequence spans 555 residues: CCR4-NOT transcription complex subunit 6-like (555 aa).

The interval 1 to 152 (MRLIGMPKEK…NLYQDPDGTR (152 aa)) is required for interaction with CNOT1, CNOT3 and CNOT7. 4 LRR repeats span residues 57–78 (HLTALHLNDNYLSRIPPDIAKL), 80–101 (NLVYLDLSSNKLRSLPAELGNM), 103–125 (SLRELLLNNNLLRVLPYELGRLF), and 126–148 (QLQTLGLKGNPLSQDILNLYQDP). Residues 158 to 555 (MLDNLAVHPE…VNGVHLPNRR (398 aa)) are nuclease domain. Mg(2+) is bound at residue Glu-240. Positions 240, 276, 360, and 365 each coordinate substrate. Asp-410 contacts Mg(2+). Asp-410 (proton donor/acceptor) is an active-site residue. Substrate contacts are provided by Asn-412, Asn-479, and Phe-484.

Belongs to the CCR4/nocturin family. Component of the CCR4-NOT complex; distinct complexes seem to exist that differ in the participation of probably mutually exclusive catalytic subunits; the complex contains two deadenylase subunits, CNOT6 or CNOT6L, and CNOT7 or CNOT8. Interacts with CNOT1, CNOT3, CNOT7, CNOT8 and CNOT9. Interacts with TOB1. Interacts with NANOS2. Interacts with ZFP36. Interacts with ZFP36L2. Interacts with RBM46. The cofactor is Mg(2+). As to expression, highly expressed in placenta, skeletal muscle, pancreas, testis and leukocytes. Weakly expressed in heart, spleen and thymus.

Its subcellular location is the cytoplasm. The protein resides in the nucleus. It catalyses the reaction Exonucleolytic cleavage of poly(A) to 5'-AMP.. With respect to regulation, inhibited by free AMP, and with lesser efficiency also by CMP, GMP, UMP, ATP and neomycin. In terms of biological role, has 3'-5' poly(A) exoribonuclease activity for synthetic poly(A) RNA substrate. Catalytic component of the CCR4-NOT complex which is one of the major cellular mRNA deadenylases and is linked to various cellular processes including bulk mRNA degradation, miRNA-mediated repression, translational repression during translational initiation and general transcription regulation. Additional complex functions may be a consequence of its influence on mRNA expression. May be involved in the deadenylation-dependent degradation of mRNAs through the 3'-UTR AU-rich element-mediated mechanism. Involved in deadenylation-dependent degradation of CDKN1B mRNA. Its mRNA deadenylase activity can be inhibited by TOB1. Mediates cell proliferation and cell survival and prevents cellular senescence. This is CCR4-NOT transcription complex subunit 6-like (CNOT6L) from Homo sapiens (Human).